A 395-amino-acid chain; its full sequence is Chorismate synthase (395 aa).

It belongs to the chorismate synthase family. Homotetramer. FMNH2 serves as cofactor.

The enzyme catalyses 5-O-(1-carboxyvinyl)-3-phosphoshikimate = chorismate + phosphate. Its pathway is metabolic intermediate biosynthesis; chorismate biosynthesis; chorismate from D-erythrose 4-phosphate and phosphoenolpyruvate: step 7/7. The chain is Chorismate synthase from Schizosaccharomyces pombe (strain 972 / ATCC 24843) (Fission yeast).